The chain runs to 513 residues: Solute carrier family 2, facilitated glucose transporter member 7 (513 aa).

Residues 1-21 (MEDKEIGTPLPLPHSEARLQP) lie on the Cytoplasmic side of the membrane. A helical transmembrane segment spans residues 22 to 42 (TLVLTTLSAAFGSVFQYGYNI). Residues 43–78 (AVINTPHKVFKSFYNDTHFERHGTFMDESTLLLLWS) are Extracellular-facing. A glycan (N-linked (GlcNAc...) asparagine) is linked at Asn-57. The helical transmembrane segment at 79–99 (CTVSMFPLGGLLGSLVVGLMV) threads the bilayer. At 100–107 (NKWGRKGT) the chain is on the cytoplasmic side. The helical transmembrane segment at 108-128 (LLINNVFAITSAVLMGVSKVA) threads the bilayer. Topologically, residues 129-138 (RAFELIILSR) are extracellular. The helical transmembrane segment at 139 to 159 (VLVGICAGIAYSTLPMYLGEL) threads the bilayer. Topologically, residues 160 to 172 (APQNLRGALGTMT) are cytoplasmic. Residues 173 to 193 (EVFVIIGVLLAQIFSLQAILG) traverse the membrane as a helical segment. Over 194–198 (NATGW) the chain is Extracellular. A helical transmembrane segment spans residues 199-219 (PILLALTGVPAVIQLLSLPFF). The Cytoplasmic segment spans residues 220-282 (PESPRYTLIE…LNLFTFRPLR (63 aa)). The chain crosses the membrane as a helical span at residues 283-303 (WQLISIVVLMAGQQLSGINAV). Residues 295-296 (QQ) and Asn-301 each bind D-glucose. Residues 304–322 (NYYADVIYTSAGVDPTQSQ) are Extracellular-facing. A helical membrane pass occupies residues 323–343 (YVTLGSGVINLVMTLVSAVII). D-glucose is bound at residue Asn-332. Topologically, residues 344 to 351 (ERLGRRIL) are cytoplasmic. Residues 352-372 (LLSGYAICCSACLVLTVALLL) traverse the membrane as a helical segment. At 373–380 (QSTAPELS) the chain is on the extracellular side. The chain crosses the membrane as a helical span at residues 381–401 (YLSIVCVFSYIVGHSIGPSPV). At 402 to 416 (PSVVRTEIVLQSSRT) the chain is on the cytoplasmic side. Residues 417–437 (AAFTVDGAVHWLTNFIVGLTF) traverse the membrane as a helical segment. Residues 438–446 (PSIQVAIGA) lie on the Extracellular side of the membrane. The helical transmembrane segment at 447 to 467 (YSFLVFAGVCILTAAYIYVVI) threads the bilayer. The Cytoplasmic portion of the chain corresponds to 468–513 (PETKGRTFVEINCAFAKRNGVEFPEEKEVATAKPHTPSLPTKETAF). Residues 494–513 (KEVATAKPHTPSLPTKETAF) form a disordered region.

This sequence belongs to the major facilitator superfamily. Sugar transporter (TC 2.A.1.1) family. Glucose transporter subfamily.

It is found in the cell membrane. It localises to the apical cell membrane. It catalyses the reaction D-glucose(out) = D-glucose(in). It carries out the reaction D-fructose(out) = D-fructose(in). Probable sugar transporter. Even if its physiological substrate is subject to discussion, it is able to transport glucose and fructose. Does not transport galactose, 2-deoxy-d-glucose and xylose. The sequence is that of Solute carrier family 2, facilitated glucose transporter member 7 from Mus musculus (Mouse).